The sequence spans 266 residues: MKEIKVIIAGPRGRMGHEAVLLMERTEHFNLVAAVDYKHGGEKISDLPGMPALHAPIYADLHTCLDEVEADVLLDLTTPEVGKQHVTLAVERGLRSVIGTTGFTEEELTRLTENAKEKAVGTIIAPNFAIGAVLMMKFSQMAAKYFQDVEVIELHHDQKLDAPSGTAVKTVELIRQNRESKQQGHPNEVEQLAGARGANVDGIHIHSVRLPGLIAHQEVMFGGDGQMLTVRHDSFNRASFMSGVKLSIETVMNLDHLVYGLENIID.

Residue 10–15 (GPRGRM) participates in NAD(+) binding. Residue lysine 38 participates in NADP(+) binding. NAD(+) contacts are provided by residues 99–101 (GTT) and 125–128 (APNF). Catalysis depends on histidine 155, which acts as the Proton donor/acceptor. Histidine 156 is a (S)-2,3,4,5-tetrahydrodipicolinate binding site. Residue lysine 159 is the Proton donor of the active site. Residue 165 to 166 (GT) coordinates (S)-2,3,4,5-tetrahydrodipicolinate.

This sequence belongs to the DapB family.

It localises to the cytoplasm. It carries out the reaction (S)-2,3,4,5-tetrahydrodipicolinate + NAD(+) + H2O = (2S,4S)-4-hydroxy-2,3,4,5-tetrahydrodipicolinate + NADH + H(+). It catalyses the reaction (S)-2,3,4,5-tetrahydrodipicolinate + NADP(+) + H2O = (2S,4S)-4-hydroxy-2,3,4,5-tetrahydrodipicolinate + NADPH + H(+). It participates in amino-acid biosynthesis; L-lysine biosynthesis via DAP pathway; (S)-tetrahydrodipicolinate from L-aspartate: step 4/4. In terms of biological role, catalyzes the conversion of 4-hydroxy-tetrahydrodipicolinate (HTPA) to tetrahydrodipicolinate. The sequence is that of 4-hydroxy-tetrahydrodipicolinate reductase from Bacillus cereus (strain ATCC 14579 / DSM 31 / CCUG 7414 / JCM 2152 / NBRC 15305 / NCIMB 9373 / NCTC 2599 / NRRL B-3711).